The sequence spans 90 residues: Electron transfer flavoprotein regulatory factor 1 (90 aa).

This sequence belongs to the complex I LYR family. In terms of assembly, homotetramer. Interacts with NDUFAB1. Interacts with ETFA. Interacts with ETFB.

It localises to the mitochondrion. In terms of biological role, acts as a regulator of the electron transfer flavoprotein by promoting the removal of flavin from the ETF holoenzyme (composed of ETFA and ETFB). The protein is Electron transfer flavoprotein regulatory factor 1 of Homo sapiens (Human).